The chain runs to 270 residues: Phosphatidylglycerol--prolipoprotein diacylglyceryl transferase (270 aa).

4 consecutive transmembrane segments (helical) span residues 19–39 (FPVY…LWLA), 56–76 (LVLI…VIFE), 92–112 (QGGL…ILFA), and 116–136 (GVSF…GQAI). Position 138 (Arg138) interacts with a 1,2-diacyl-sn-glycero-3-phospho-(1'-sn-glycerol). The next 3 helical transmembrane spans lie at 178-198 (HPTF…LLAL), 206-226 (GELF…VEGL), and 236-256 (LRIA…FIIV).

This sequence belongs to the Lgt family.

Its subcellular location is the cell membrane. It catalyses the reaction L-cysteinyl-[prolipoprotein] + a 1,2-diacyl-sn-glycero-3-phospho-(1'-sn-glycerol) = an S-1,2-diacyl-sn-glyceryl-L-cysteinyl-[prolipoprotein] + sn-glycerol 1-phosphate + H(+). It functions in the pathway protein modification; lipoprotein biosynthesis (diacylglyceryl transfer). Functionally, catalyzes the transfer of the diacylglyceryl group from phosphatidylglycerol to the sulfhydryl group of the N-terminal cysteine of a prolipoprotein, the first step in the formation of mature lipoproteins. This chain is Phosphatidylglycerol--prolipoprotein diacylglyceryl transferase, found in Bacillus thuringiensis subsp. konkukian (strain 97-27).